We begin with the raw amino-acid sequence, 315 residues long: Prephenate dehydratase (315 aa).

The Prephenate dehydratase domain occupies 3–189; it reads RIAYLGPEGT…ARTRFLLIGV (187 aa). The 78-residue stretch at 203-280 folds into the ACT domain; that stretch reads SVVLRIANVP…ADVRYLGSWP (78 aa).

As to quaternary structure, homodimer.

It catalyses the reaction prephenate + H(+) = 3-phenylpyruvate + CO2 + H2O. Its pathway is amino-acid biosynthesis; L-phenylalanine biosynthesis; phenylpyruvate from prephenate: step 1/1. The chain is Prephenate dehydratase (pheA) from Mycobacterium marinum (strain ATCC BAA-535 / M).